A 492-amino-acid polypeptide reads, in one-letter code: ATP synthase subunit beta, chloroplastic (492 aa).

Position 170 to 177 (170 to 177 (GGAGVGKT)) interacts with ATP.

It belongs to the ATPase alpha/beta chains family. As to quaternary structure, F-type ATPases have 2 components, CF(1) - the catalytic core - and CF(0) - the membrane proton channel. CF(1) has five subunits: alpha(3), beta(3), gamma(1), delta(1), epsilon(1). CF(0) has four main subunits: a(1), b(1), b'(1) and c(9-12).

It localises to the plastid. It is found in the chloroplast thylakoid membrane. It catalyses the reaction ATP + H2O + 4 H(+)(in) = ADP + phosphate + 5 H(+)(out). Its function is as follows. Produces ATP from ADP in the presence of a proton gradient across the membrane. The catalytic sites are hosted primarily by the beta subunits. In Pinus thunbergii (Japanese black pine), this protein is ATP synthase subunit beta, chloroplastic.